A 206-amino-acid polypeptide reads, in one-letter code: MIGKLKGTVDSFGEDHLILDVHGVGYLVHCSGRTLQALPRVGEAAVLFIETHVREDQIRLFGFVTEAEREWFRLLQGIQGIGTKTALAILSTLKPSDLAQAVALGDKTALARANGVGPRVATRIVTELKDKVPAFTAADPGLARLAADVEATEAAGGALADAVSALVNLGYGQAQAHTAIAAAGRKAGEDATTETLIRLGLKELAK.

The tract at residues 1-64 is domain I; that stretch reads MIGKLKGTVD…EDQIRLFGFV (64 aa). Positions 65–143 are domain II; it reads TEAEREWFRL…AFTAADPGLA (79 aa). A flexible linker region spans residues 144 to 154; that stretch reads RLAADVEATEA. Residues 154 to 206 are domain III; it reads AAGGALADAVSALVNLGYGQAQAHTAIAAAGRKAGEDATTETLIRLGLKELAK.

This sequence belongs to the RuvA family. As to quaternary structure, homotetramer. Forms an RuvA(8)-RuvB(12)-Holliday junction (HJ) complex. HJ DNA is sandwiched between 2 RuvA tetramers; dsDNA enters through RuvA and exits via RuvB. An RuvB hexamer assembles on each DNA strand where it exits the tetramer. Each RuvB hexamer is contacted by two RuvA subunits (via domain III) on 2 adjacent RuvB subunits; this complex drives branch migration. In the full resolvosome a probable DNA-RuvA(4)-RuvB(12)-RuvC(2) complex forms which resolves the HJ.

The protein resides in the cytoplasm. Its function is as follows. The RuvA-RuvB-RuvC complex processes Holliday junction (HJ) DNA during genetic recombination and DNA repair, while the RuvA-RuvB complex plays an important role in the rescue of blocked DNA replication forks via replication fork reversal (RFR). RuvA specifically binds to HJ cruciform DNA, conferring on it an open structure. The RuvB hexamer acts as an ATP-dependent pump, pulling dsDNA into and through the RuvAB complex. HJ branch migration allows RuvC to scan DNA until it finds its consensus sequence, where it cleaves and resolves the cruciform DNA. The polypeptide is Holliday junction branch migration complex subunit RuvA (Azorhizobium caulinodans (strain ATCC 43989 / DSM 5975 / JCM 20966 / LMG 6465 / NBRC 14845 / NCIMB 13405 / ORS 571)).